The chain runs to 309 residues: RHOMBOID-like protein 5 (309 aa).

The next 7 helical transmembrane spans lie at 27 to 47 (IPVP…FVTF), 113 to 133 (IWLH…MCIG), 140 to 160 (FGFM…SLVS), 170 to 190 (VSVG…SELI), 200 to 220 (CTAL…GFLP), 222 to 242 (VDNS…FVLL), and 274 to 294 (IFRF…YTKL). The active-site Nucleophile is serine 175. Histidine 227 functions as the Charge relay system in the catalytic mechanism.

This sequence belongs to the peptidase S54 family.

Its subcellular location is the membrane. It carries out the reaction Cleaves type-1 transmembrane domains using a catalytic dyad composed of serine and histidine that are contributed by different transmembrane domains.. In terms of biological role, probable rhomboid-type serine protease that catalyzes intramembrane proteolysis. May function in reproductive organs maturation. In Arabidopsis thaliana (Mouse-ear cress), this protein is RHOMBOID-like protein 5.